Here is a 62-residue protein sequence, read N- to C-terminus: UPF0370 protein plu2724 (62 aa).

A helical transmembrane segment spans residues 3–23 (WLADYWWIILILLVGVLLNAI). Residues 36 to 62 (DNKPELPPHRDLNSKWDDEDDWPQKKP) are disordered.

Belongs to the UPF0370 family.

It localises to the cell membrane. The chain is UPF0370 protein plu2724 from Photorhabdus laumondii subsp. laumondii (strain DSM 15139 / CIP 105565 / TT01) (Photorhabdus luminescens subsp. laumondii).